We begin with the raw amino-acid sequence, 308 residues long: Ribosomal RNA small subunit methyltransferase H (308 aa).

S-adenosyl-L-methionine-binding positions include 33–35 (GGH), Asp52, Phe78, Asp99, and Gln106. The tract at residues 289–308 (EEIETNSRSRSAKLRVAEKL) is disordered.

The protein belongs to the methyltransferase superfamily. RsmH family.

It is found in the cytoplasm. It catalyses the reaction cytidine(1402) in 16S rRNA + S-adenosyl-L-methionine = N(4)-methylcytidine(1402) in 16S rRNA + S-adenosyl-L-homocysteine + H(+). Specifically methylates the N4 position of cytidine in position 1402 (C1402) of 16S rRNA. This Thermoanaerobacter sp. (strain X514) protein is Ribosomal RNA small subunit methyltransferase H.